A 238-amino-acid chain; its full sequence is Large ribosomal subunit protein uL1 (238 aa).

It belongs to the universal ribosomal protein uL1 family. In terms of assembly, part of the 50S ribosomal subunit.

Binds directly to 23S rRNA. The L1 stalk is quite mobile in the ribosome, and is involved in E site tRNA release. Functionally, protein L1 is also a translational repressor protein, it controls the translation of the L11 operon by binding to its mRNA. This is Large ribosomal subunit protein uL1 from Beutenbergia cavernae (strain ATCC BAA-8 / DSM 12333 / CCUG 43141 / JCM 11478 / NBRC 16432 / NCIMB 13614 / HKI 0122).